We begin with the raw amino-acid sequence, 276 residues long: Rhomboid protease GlpG homolog (276 aa).

The next 6 membrane-spanning stretches (helical) occupy residues 94-114, 142-162, 168-188, 192-212, 225-245, and 252-272; these read GPLT…MSII, LLLH…WYLA, SVGS…GGVI, IAGP…GYVW, LPRG…LGLF, and ADLV…TLHA.

This sequence belongs to the peptidase S54 family.

It is found in the cell inner membrane. The polypeptide is Rhomboid protease GlpG homolog (glpG) (Cronobacter sakazakii (strain ATCC BAA-894) (Enterobacter sakazakii)).